Consider the following 272-residue polypeptide: Aquaporin FA-CHIP (272 aa).

Over Met1 to Glu17 the chain is Cytoplasmic. A helical membrane pass occupies residues Phe18 to Phe35. Residues Asn36–Asp52 lie on the Extracellular side of the membrane. A glycan (N-linked (GlcNAc...) asparagine) is linked at Asn44. Residues Ile53 to Val71 form a helical membrane-spanning segment. The Cytoplasmic portion of the chain corresponds to Gly72–Lys97. An NPA 1 motif is present at residues Asn80–Ala82. The chain crosses the membrane as a helical span at residues Ala98–Ile119. Topologically, residues Thr120–Ala139 are extracellular. Asn125 is a glycosylation site (N-linked (GlcNAc...) asparagine). The chain crosses the membrane as a helical span at residues Gly140–Val160. At Thr161–Val168 the chain is on the cytoplasmic side. A helical transmembrane segment spans residues Ser169–Ile188. Over Asp189 to Trp214 the chain is Extracellular. The NPA 2 motif lies at Asn196–Ala198. The N-linked (GlcNAc...) asparagine glycan is linked to Asn209. Residues Ile215–Ala236 traverse the membrane as a helical segment. Residues Pro237–Lys272 lie on the Cytoplasmic side of the membrane.

It belongs to the MIP/aquaporin (TC 1.A.8) family.

It localises to the membrane. In terms of biological role, forms a water-specific channel. This is Aquaporin FA-CHIP (AQPA) from Pelophylax lessonae (Pool frog).